The primary structure comprises 248 residues: Protein LIFEGUARD 3 (248 aa).

7 helical membrane-spanning segments follow: residues 42–62, 74–94, 105–125, 130–150, 165–185, 188–208, and 222–242; these read VYSIIAFQLLATVAVAATVVT, GLGLALYIVIIITPLIVLCPL, YLLLGIFTLALAFVVGLTCAF, VILESVILTSVVVLSLTLYTF, FLFGALTVLIFFALIQILFPL, VSVMIYGCLVSIIFCGYIVYD, and IWAAVSLYLDIINLFLYLLTV.

Belongs to the BI1 family.

It localises to the membrane. This Arabidopsis thaliana (Mouse-ear cress) protein is Protein LIFEGUARD 3.